Reading from the N-terminus, the 680-residue chain is GTPase Obg (680 aa).

Residues 2-160 (DQFIDVVSFE…LNIRLEVKLI (159 aa)) enclose the Obg domain. Residues 161 to 336 (ADIGLVGMPN…LDGDMLDKVT (176 aa)) enclose the OBG-type G domain. Residues 167-174 (GMPNTGKS), 192-196 (FTTLT), 214-217 (DIPG), 281-284 (NKTD), and 317-319 (PEI) contribute to the GTP site. Residues Ser174 and Thr194 each coordinate Mg(2+). The segment at 371 to 680 (TKRVFGPVVS…NGVLSYAVNI (310 aa)) is radical SAM domain. The region spanning 383–613 (LGNSLGIDVI…IEIDVPSVSD (231 aa)) is the Radical SAM core domain. Residues Cys397, Cys401, and Cys404 each contribute to the [4Fe-4S] cluster site.

This sequence belongs to the TRAFAC class OBG-HflX-like GTPase superfamily. OBG GTPase family. Monomer. Requires Mg(2+) as cofactor. The cofactor is [4Fe-4S] cluster.

The protein resides in the cytoplasm. Its function is as follows. An essential GTPase which binds GTP, GDP and possibly (p)ppGpp with moderate affinity, with high nucleotide exchange rates and a fairly low GTP hydrolysis rate. Plays a role in control of the cell cycle, stress response, ribosome biogenesis and in those bacteria that undergo differentiation, in morphogenesis control. The protein is GTPase Obg of Brachyspira hyodysenteriae (strain ATCC 49526 / WA1).